The primary structure comprises 686 residues: Glycine--tRNA ligase beta subunit (686 aa).

Belongs to the class-II aminoacyl-tRNA synthetase family. As to quaternary structure, tetramer of two alpha and two beta subunits.

The protein localises to the cytoplasm. The catalysed reaction is tRNA(Gly) + glycine + ATP = glycyl-tRNA(Gly) + AMP + diphosphate. The polypeptide is Glycine--tRNA ligase beta subunit (Geobacter metallireducens (strain ATCC 53774 / DSM 7210 / GS-15)).